The sequence spans 295 residues: Alpha-1A adrenergic receptor (295 aa).

The Extracellular segment spans residues 1 to 27; it reads MVFLSGNASDSSNCTHPPAPVNISKAI. N-linked (GlcNAc...) asparagine glycans are attached at residues asparagine 7, asparagine 13, and asparagine 22. The helical transmembrane segment at 28-51 threads the bilayer; sequence LLGVILGGLIIFGVLGNILVILSV. At 52 to 64 the chain is on the cytoplasmic side; sequence ACHRHLHSVTHYY. The helical transmembrane segment at 65–88 threads the bilayer; that stretch reads IVNLAVADLLLTSTVLPFSAIFEI. Topologically, residues 89 to 99 are extracellular; sequence LGYWAFGRVFC. The cysteines at positions 99 and 176 are disulfide-linked. A helical transmembrane segment spans residues 100–122; sequence NIWAAVDVLCCTASIMGLCIISI. Topologically, residues 123–143 are cytoplasmic; it reads DRYIGVSYPLRYPTIVTQKRG. A helical transmembrane segment spans residues 144-167; the sequence is LMALLCVWALSLVISIGPLFGWRQ. At 168 to 181 the chain is on the extracellular side; it reads PAPEDETICQITEE. A helical transmembrane segment spans residues 182–205; the sequence is PGYVLFSALGSFYVPLTIILVMYC. Residues 206–273 lie on the Cytoplasmic side of the membrane; sequence RVYVVAKRES…FSREKKAAKT (68 aa). Serine 215 bears the Phosphoserine; by PKA mark. The chain crosses the membrane as a helical span at residues 274-295; the sequence is LGIVVGCFVLCWLPFFLVMPIG.

The protein belongs to the G-protein coupled receptor 1 family. Adrenergic receptor subfamily. ADRA1A sub-subfamily. As to quaternary structure, homo- and heterooligomer. Heterooligomerizes with ADRA1B homooligomers in cardiac myocytes. Interacts with CAVIN4.

The protein resides in the nucleus membrane. Its subcellular location is the cell membrane. The protein localises to the cytoplasm. It localises to the membrane. It is found in the caveola. In terms of biological role, this alpha-adrenergic receptor mediates its action by association with G proteins that activate a phosphatidylinositol-calcium second messenger system. Its effect is mediated by G(q) and G(11) proteins. Nuclear ADRA1A-ADRA1B heterooligomers regulate phenylephrine (PE)-stimulated ERK signaling in cardiac myocytes. The polypeptide is Alpha-1A adrenergic receptor (ADRA1A) (Canis lupus familiaris (Dog)).